A 340-amino-acid chain; its full sequence is Ketol-acid reductoisomerase (NADP(+)) (340 aa).

Residues 1–182 (MRVYYDRDCD…GGGRSGIIET (182 aa)) enclose the KARI N-terminal Rossmann domain. NADP(+) is bound by residues 24–27 (YGSQ), R48, S51, S53, and 83–86 (DELQ). The active site involves H108. G134 provides a ligand contact to NADP(+). Residues 183–329 (NFREECETDL…ETLRGMMPWI (147 aa)) enclose the KARI C-terminal knotted domain. D191, E195, E227, and E231 together coordinate Mg(2+). S252 contacts substrate.

It belongs to the ketol-acid reductoisomerase family. Mg(2+) serves as cofactor.

The catalysed reaction is (2R)-2,3-dihydroxy-3-methylbutanoate + NADP(+) = (2S)-2-acetolactate + NADPH + H(+). It carries out the reaction (2R,3R)-2,3-dihydroxy-3-methylpentanoate + NADP(+) = (S)-2-ethyl-2-hydroxy-3-oxobutanoate + NADPH + H(+). It participates in amino-acid biosynthesis; L-isoleucine biosynthesis; L-isoleucine from 2-oxobutanoate: step 2/4. It functions in the pathway amino-acid biosynthesis; L-valine biosynthesis; L-valine from pyruvate: step 2/4. Involved in the biosynthesis of branched-chain amino acids (BCAA). Catalyzes an alkyl-migration followed by a ketol-acid reduction of (S)-2-acetolactate (S2AL) to yield (R)-2,3-dihydroxy-isovalerate. In the isomerase reaction, S2AL is rearranged via a Mg-dependent methyl migration to produce 3-hydroxy-3-methyl-2-ketobutyrate (HMKB). In the reductase reaction, this 2-ketoacid undergoes a metal-dependent reduction by NADPH to yield (R)-2,3-dihydroxy-isovalerate. In Jannaschia sp. (strain CCS1), this protein is Ketol-acid reductoisomerase (NADP(+)).